A 675-amino-acid chain; its full sequence is Transketolase, chloroplastic (675 aa).

Thiamine diphosphate contacts are provided by residues His-78 and 127-129 (GPL). Asp-168 contributes to the Mg(2+) binding site. Thiamine diphosphate-binding residues include Gly-169, Glu-173, and Asn-198. The Mg(2+) site is built by Asn-198 and Ile-200. Thiamine diphosphate is bound at residue His-275. Substrate contacts are provided by His-275, Arg-369, and Ser-396. Residues Glu-423 and 450-453 (FTDY) each bind thiamine diphosphate. Residue Glu-423 is the Proton donor of the active site. Substrate is bound by residues His-474, Asp-482, and Arg-533.

Homodimer. Mg(2+) serves as cofactor. The cofactor is Ca(2+). It depends on Mn(2+) as a cofactor. Co(2+) is required as a cofactor. Requires thiamine diphosphate as cofactor.

It is found in the plastid. The protein localises to the chloroplast thylakoid membrane. The catalysed reaction is D-sedoheptulose 7-phosphate + D-glyceraldehyde 3-phosphate = aldehydo-D-ribose 5-phosphate + D-xylulose 5-phosphate. It participates in carbohydrate biosynthesis; Calvin cycle. Its function is as follows. Catalyzes the reversible transfer of a two-carbon ketol group from fructose-6-phosphate or sedoheptulose-7-phosphate to glyceraldehyde-3-phosphate to yield xylulose-5-phosphate and erythrose-4-phosphate or ribose-5-phosphate, respectively. This chain is Transketolase, chloroplastic, found in Zea mays (Maize).